A 176-amino-acid chain; its full sequence is Nucleoside triphosphate/diphosphate phosphatase (176 aa).

Arg-23 (proton donor) is an active-site residue. Asn-87, Asp-103, Asp-105, Asp-107, Asp-120, and Glu-123 together coordinate Mg(2+).

It belongs to the Ntdp family. Mg(2+) serves as cofactor.

It catalyses the reaction a ribonucleoside 5'-triphosphate + H2O = a ribonucleoside 5'-diphosphate + phosphate + H(+). The catalysed reaction is a ribonucleoside 5'-diphosphate + H2O = a ribonucleoside 5'-phosphate + phosphate + H(+). In terms of biological role, has nucleoside phosphatase activity towards nucleoside triphosphates and nucleoside diphosphates. This is Nucleoside triphosphate/diphosphate phosphatase from Bacillus cereus (strain AH820).